A 142-amino-acid polypeptide reads, in one-letter code: Serine/threonine-protein kinase BtrW (142 aa).

Belongs to the anti-sigma-factor family. As to quaternary structure, probably able to multimerize; interacts with BtrV.

The catalysed reaction is L-seryl-[protein] + ATP = O-phospho-L-seryl-[protein] + ADP + H(+). The enzyme catalyses L-threonyl-[protein] + ATP = O-phospho-L-threonyl-[protein] + ADP + H(+). Its function is as follows. Possible negative regulator of sigma-B activity. Phosphorylates and inactivates its specific antagonist protein, BtrV. Upon phosphorylation of BtrV, BtrW is released and binds to an unknown partner(s) that might be sigma-B, thereby blocking its ability to form a complex with its partner (possibly an RNA polymerase holoenzyme (E-sigma-B)). Involved in type III secretion system (T3SS). Phosphorylates BtrV. The polypeptide is Serine/threonine-protein kinase BtrW (btrW) (Bordetella bronchiseptica (strain ATCC BAA-588 / NCTC 13252 / RB50) (Alcaligenes bronchisepticus)).